The chain runs to 213 residues: Nicotinate-nucleotide adenylyltransferase (213 aa).

Belongs to the NadD family.

The catalysed reaction is nicotinate beta-D-ribonucleotide + ATP + H(+) = deamido-NAD(+) + diphosphate. It functions in the pathway cofactor biosynthesis; NAD(+) biosynthesis; deamido-NAD(+) from nicotinate D-ribonucleotide: step 1/1. In terms of biological role, catalyzes the reversible adenylation of nicotinate mononucleotide (NaMN) to nicotinic acid adenine dinucleotide (NaAD). The sequence is that of Nicotinate-nucleotide adenylyltransferase from Salmonella typhi.